Reading from the N-terminus, the 540-residue chain is Phenylalanine--tRNA ligase beta subunit (540 aa).

The region spanning 270-347 (MTPRTLNVPR…IGYGFDKIKS (78 aa)) is the B5 domain. Mg(2+) is bound by residues D325, D331, E334, and D335.

This sequence belongs to the phenylalanyl-tRNA synthetase beta subunit family. Type 2 subfamily. In terms of assembly, tetramer of two alpha and two beta subunits. The cofactor is Mg(2+).

Its subcellular location is the cytoplasm. It carries out the reaction tRNA(Phe) + L-phenylalanine + ATP = L-phenylalanyl-tRNA(Phe) + AMP + diphosphate + H(+). In Methanococcoides burtonii (strain DSM 6242 / NBRC 107633 / OCM 468 / ACE-M), this protein is Phenylalanine--tRNA ligase beta subunit.